A 366-amino-acid polypeptide reads, in one-letter code: Phosphate acyltransferase (366 aa).

Positions 334–366 (ESAKNKETQSKQASTKNTAPKTSETTKESQQSL) are disordered. Over residues 343–366 (SKQASTKNTAPKTSETTKESQQSL) the composition is skewed to polar residues.

It belongs to the PlsX family. Homodimer. Probably interacts with PlsY.

Its subcellular location is the cytoplasm. It catalyses the reaction a fatty acyl-[ACP] + phosphate = an acyl phosphate + holo-[ACP]. Its pathway is lipid metabolism; phospholipid metabolism. Its function is as follows. Catalyzes the reversible formation of acyl-phosphate (acyl-PO(4)) from acyl-[acyl-carrier-protein] (acyl-ACP). This enzyme utilizes acyl-ACP as fatty acyl donor, but not acyl-CoA. The sequence is that of Phosphate acyltransferase from Onion yellows phytoplasma (strain OY-M).